The chain runs to 556 residues: Genetic interactor of prohibitins 3, mitochondrial (556 aa).

The N-terminal 21 residues, 1–21 (MLNLCHALRGVRQFSCSVIVK), are a transit peptide targeting the mitochondrion. The CP-type G domain maps to 113–305 (ESTLNDILNY…LFDLPGYSTS (193 aa)).

The protein belongs to the TRAFAC class YlqF/YawG GTPase family. GEP3 subfamily.

It is found in the mitochondrion. Functionally, interacts genetically with prohibitins and thus may be involved in the mitochondrial lipid metabolism. The polypeptide is Genetic interactor of prohibitins 3, mitochondrial (GEP3) (Saccharomyces cerevisiae (strain ATCC 204508 / S288c) (Baker's yeast)).